The sequence spans 312 residues: Pyrimidine-specific ribonucleoside hydrolase RihA (312 aa).

Histidine 240 is an active-site residue.

It belongs to the IUNH family. RihA subfamily.

Functionally, hydrolyzes cytidine or uridine to ribose and cytosine or uracil, respectively. This chain is Pyrimidine-specific ribonucleoside hydrolase RihA, found in Shewanella woodyi (strain ATCC 51908 / MS32).